A 329-amino-acid chain; its full sequence is Short-chain dehydrogenase/reductase prx4 (329 aa).

Positions 1 to 21 are cleaved as a signal peptide; sequence MIPRWQPASIALLLHLDTLRC. Positions 58, 60, and 81 each coordinate NADP(+). The N-linked (GlcNAc...) asparagine glycan is linked to N91. Positions 98, 121, 161, 194, 198, and 229 each coordinate NADP(+). The Proton acceptor role is filled by Y194. K198 serves as the catalytic Lowers pKa of active site Tyr. Residues 238–258 form a helical membrane-spanning segment; that stretch reads GPLMAAGLPVSSAHMVGLAVV.

Belongs to the short-chain dehydrogenases/reductases (SDR) family.

It localises to the membrane. It functions in the pathway sesquiterpene biosynthesis. Its function is as follows. Short-chain dehydrogenase/reductase; part of the gene cluster that mediates the biosynthesis of PR-toxin, a bicyclic sesquiterpene belonging to the eremophilane class and acting as a mycotoxin. The first step of the pathway is catalyzed by the aristolochene synthase which performs the cyclization of trans,trans-farnesyl diphosphate (FPP) to the bicyclic sesquiterpene aristolochene. Following the formation of aristolochene, the non-oxygenated aristolochene is converted to the trioxygenated intermediate eremofortin B, via 7-epi-neopetasone. This conversion appears to involve three enzymes, a hydroxysterol oxidase-like enzyme, the quinone-oxidase prx3 that forms the quinone-type-structure in the bicyclic nucleus of aristolochene with the C8-oxo group and the C-3 hydroxyl group, and the P450 monooxygenase prx9 that introduces the epoxide at the double bond between carbons 1 and 2. No monoxy or dioxy-intermediates have been reported to be released to the broth, so these three early oxidative reactions may be coupled together. Eremofortin B is further oxidized by another P450 monooxygenase, that introduces a second epoxide between carbons 7 and 11 prior to acetylation to eremofortin A by the acetyltransferase prx11. The second epoxidation may be performed by a second P450 monooxygenase. After the acetylation step, eremofortin A is converted to eremofortin C and then to PR-toxin. First the conversion of eremofortin A to eremofortin C proceeds by oxidation of the side chain of the molecule at C-12 and is catalyzed by the short-chain oxidoreductase prx1. The cytochrome P450 monooxygenase prx8 also plays a role in this step. The primary alcohol formed at C-12 is finally oxidized by the short-chain alcohol dehydrogenase prx4 that forms PR-toxin. This chain is Short-chain dehydrogenase/reductase prx4, found in Penicillium rubens (strain ATCC 28089 / DSM 1075 / NRRL 1951 / Wisconsin 54-1255) (Penicillium chrysogenum).